The primary structure comprises 276 residues: N-acyl homoserine lactonase AiiB (276 aa).

6 residues coordinate Zn(2+): His111, His113, His116, His191, Asp213, and His259.

Belongs to the metallo-beta-lactamase superfamily. It depends on Zn(2+) as a cofactor.

It catalyses the reaction an N-acyl-L-homoserine lactone + H2O = an N-acyl-L-homoserine + H(+). This chain is N-acyl homoserine lactonase AiiB, found in Agrobacterium fabrum (strain C58 / ATCC 33970) (Agrobacterium tumefaciens (strain C58)).